The sequence spans 188 residues: Molybdopterin synthase catalytic subunit (188 aa).

Residues 1 to 10 show a composition bias toward polar residues; it reads MSTSETSSYT. Positions 1–21 are disordered; sequence MSTSETSSYTPDIPSEPVTKT. Substrate is bound by residues 123 to 124, Lys139, and 146 to 148; these read HR and KLE.

It belongs to the MoaE family. MOCS2B subfamily. As to quaternary structure, heterotetramer; composed of 2 small (MOCS2A) and 2 large (MOCS2B) subunits.

The protein resides in the cytoplasm. The enzyme catalyses 2 [molybdopterin-synthase sulfur-carrier protein]-C-terminal-Gly-aminoethanethioate + cyclic pyranopterin phosphate + H2O = molybdopterin + 2 [molybdopterin-synthase sulfur-carrier protein]-C-terminal Gly-Gly + 2 H(+). It participates in cofactor biosynthesis; molybdopterin biosynthesis. Its function is as follows. Catalytic subunit of the molybdopterin synthase complex, a complex that catalyzes the conversion of precursor Z into molybdopterin. Acts by mediating the incorporation of 2 sulfur atoms from thiocarboxylated MOCS2A into precursor Z to generate a dithiolene group. The sequence is that of Molybdopterin synthase catalytic subunit from Phaeosphaeria nodorum (strain SN15 / ATCC MYA-4574 / FGSC 10173) (Glume blotch fungus).